A 227-amino-acid chain; its full sequence is Protein FdhD (227 aa).

Mo-bis(molybdopterin guanine dinucleotide) is bound at residue 210–215; the sequence is FARNGK.

This sequence belongs to the FdhD family.

It is found in the cytoplasm. Its function is as follows. Required for formate dehydrogenase (FDH) activity. The polypeptide is Protein FdhD (Methanocaldococcus jannaschii (strain ATCC 43067 / DSM 2661 / JAL-1 / JCM 10045 / NBRC 100440) (Methanococcus jannaschii)).